A 903-amino-acid polypeptide reads, in one-letter code: HTH-type transcriptional regulator MalT (903 aa).

39-46 serves as a coordination point for ATP; it reads CPAGYGKT. The 66-residue stretch at 832–897 folds into the HTH luxR-type domain; that stretch reads ELIRTSPLTQ…EAVQQAQRLL (66 aa). Positions 856-875 form a DNA-binding region, H-T-H motif; that stretch reads NDQIANELDVAATTIKTHIR.

The protein belongs to the MalT family. As to quaternary structure, monomer in solution. Oligomerizes to an active state in the presence of the positive effectors ATP and maltotriose.

Activated by ATP and maltotriose, which are both required for DNA binding. Its function is as follows. Positively regulates the transcription of the maltose regulon whose gene products are responsible for uptake and catabolism of malto-oligosaccharides. Specifically binds to the promoter region of its target genes, recognizing a short DNA motif called the MalT box. The sequence is that of HTH-type transcriptional regulator MalT from Yersinia pseudotuberculosis serotype O:1b (strain IP 31758).